Reading from the N-terminus, the 598-residue chain is Thiol:disulfide interchange protein DsbD (598 aa).

A signal peptide spans 1–19 (MAYRIITLILLLCSTSATA). Cys122 and Cys128 are disulfide-bonded. Positions 147–187 (DGQATAIEPMPSTSSRPAFNPPLPVEPRPAPELATSPAPAA) are disordered. Pro residues predominate over residues 165-176 (FNPPLPVEPRPA). 7 consecutive transmembrane segments (helical) span residues 197–217 (LPFTALWALLIGIGIAFTPCV), 242–262 (LLAFIYVQGMALTYTALGLVV), 277–297 (YVLVGLSAVFILLALSMFGLF), 330–350 (IAGLICSPCTTAPLSAILLYI), 356–376 (LWLGGGTLYLYALGMGLPLIL), 391–411 (WMSHVKTAFGFVILALPVFLL), and 423–443 (LWSMLGVAFFSWAFITSLGAT). Cys216 and Cys338 are oxidised to a cystine. One can recognise a Thioredoxin domain in the interval 459-598 (LVSARPLQDW…FSAHLRDWQA (140 aa)). Cys513 and Cys516 form a disulfide bridge.

This sequence belongs to the thioredoxin family. DsbD subfamily.

It is found in the cell inner membrane. The enzyme catalyses [protein]-dithiol + NAD(+) = [protein]-disulfide + NADH + H(+). It carries out the reaction [protein]-dithiol + NADP(+) = [protein]-disulfide + NADPH + H(+). Its function is as follows. Required to facilitate the formation of correct disulfide bonds in some periplasmic proteins and for the assembly of the periplasmic c-type cytochromes. Acts by transferring electrons from cytoplasmic thioredoxin to the periplasm. This transfer involves a cascade of disulfide bond formation and reduction steps. In Klebsiella pneumoniae subsp. pneumoniae (strain ATCC 700721 / MGH 78578), this protein is Thiol:disulfide interchange protein DsbD.